A 137-amino-acid polypeptide reads, in one-letter code: Holo-[acyl-carrier-protein] synthase (137 aa).

Asp-8 and Glu-57 together coordinate Mg(2+).

This sequence belongs to the P-Pant transferase superfamily. AcpS family. Requires Mg(2+) as cofactor.

The protein resides in the cytoplasm. The enzyme catalyses apo-[ACP] + CoA = holo-[ACP] + adenosine 3',5'-bisphosphate + H(+). Transfers the 4'-phosphopantetheine moiety from coenzyme A to a Ser of acyl-carrier-protein. This Cereibacter sphaeroides (strain ATCC 17025 / ATH 2.4.3) (Rhodobacter sphaeroides) protein is Holo-[acyl-carrier-protein] synthase.